Here is a 47-residue protein sequence, read N- to C-terminus: Large ribosomal subunit protein bL33A (47 aa).

Belongs to the bacterial ribosomal protein bL33 family.

This is Large ribosomal subunit protein bL33A from Staphylococcus aureus (strain JH1).